Consider the following 365-residue polypeptide: 5-hydroxytryptamine receptor 1F (365 aa).

The Extracellular segment spans residues 1 to 24 (MDFLNSSDQNLTSEELLNRMPSKI). N-linked (GlcNAc...) asparagine glycans are attached at residues Asn-5 and Asn-10. A helical transmembrane segment spans residues 25–49 (LVSLTLSGLALMTTTINSLVIAAII). The Cytoplasmic segment spans residues 50–59 (VTRKLHHPAN). The helical transmembrane segment at 60–81 (YLICSLAVTDFLVAVLVMPFSI) threads the bilayer. Residues 82–96 (VYIVRESWIMGQVVC) lie on the Extracellular side of the membrane. Residues Cys-96 and Cys-172 are joined by a disulfide bond. The helical transmembrane segment at 97–119 (DIWLSVDITCCTCSILHLSAIAL) threads the bilayer. Serotonin is bound by residues Asp-103 and Cys-107. The short motif at 120 to 122 (DRY) is the DRY motif; important for ligand-induced conformation changes element. The Cytoplasmic segment spans residues 120-139 (DRYRAITDAVEYARKRTPKH). Residues 140–159 (AGIMITIVWIISVFISMPPL) form a helical membrane-spanning segment. The Extracellular segment spans residues 160–178 (FWRHQGTSRDDECIIKHDH). Residues 179–202 (IVSTIYSTFGAFYIPLALILILYY) form a helical membrane-spanning segment. Residues 203–291 (KIYRAAKTLY…KISGTRERKA (89 aa)) are Cytoplasmic-facing. The helical transmembrane segment at 292-315 (ATTLGLILGAFVICWLPFFVKELV) threads the bilayer. Over 316–327 (VNVCDKCKISEE) the chain is Extracellular. A helical membrane pass occupies residues 328 to 350 (MSNFLAWLGYLNSLINPLIYTIF). Positions 343 to 347 (NPLIY) match the NPxxY motif; important for ligand-induced conformation changes and signaling motif. The Cytoplasmic portion of the chain corresponds to 351–365 (NEDFKKAFQKLVRCR).

The protein belongs to the G-protein coupled receptor 1 family.

It is found in the cell membrane. In terms of biological role, G-protein coupled receptor for 5-hydroxytryptamine (serotonin). Also functions as a receptor for various alkaloids and psychoactive substances. Ligand binding causes a conformation change that triggers signaling via guanine nucleotide-binding proteins (G proteins) and modulates the activity of downstream effectors, such as adenylate cyclase. HTR1F is coupled to G(i)/G(o) G alpha proteins and mediates inhibitory neurotransmission by inhibiting adenylate cyclase activity. The protein is 5-hydroxytryptamine receptor 1F (HTR1F) of Pan troglodytes (Chimpanzee).